A 208-amino-acid chain; its full sequence is MKTLKPALLVSIVLLVVCGLVYPLVLTGVSQVAFKDKANGSMIEVNGVKVGSELIGQSFTDARFFKGRVSSVNYNTYTKEDLVPDKDGNTSYGGVSSGSFNYGATNPELHDRVQKDIEKFLKDNPTVKREDIPTDLLTASGSGLDPNISPASAKIQIPAIAKASGISESKLQKIVDDNTSKKLFGVLGEDRVNVLKVNVEVAKILGLI.

A helical transmembrane segment spans residues 6 to 26; that stretch reads PALLVSIVLLVVCGLVYPLVL.

This sequence belongs to the KdpC family. In terms of assembly, the system is composed of three essential subunits: KdpA, KdpB and KdpC.

The protein localises to the cell membrane. Its function is as follows. Part of the high-affinity ATP-driven potassium transport (or Kdp) system, which catalyzes the hydrolysis of ATP coupled with the electrogenic transport of potassium into the cytoplasm. This subunit acts as a catalytic chaperone that increases the ATP-binding affinity of the ATP-hydrolyzing subunit KdpB by the formation of a transient KdpB/KdpC/ATP ternary complex. This Clostridioides difficile (strain 630) (Peptoclostridium difficile) protein is Potassium-transporting ATPase KdpC subunit.